A 165-amino-acid chain; its full sequence is 3-isopropylmalate dehydratase small subunit 2 (165 aa).

Belongs to the LeuD family. LeuD type 2 subfamily. Heterodimer of LeuC and LeuD.

The catalysed reaction is (2R,3S)-3-isopropylmalate = (2S)-2-isopropylmalate. Its pathway is amino-acid biosynthesis; L-leucine biosynthesis; L-leucine from 3-methyl-2-oxobutanoate: step 2/4. Catalyzes the isomerization between 2-isopropylmalate and 3-isopropylmalate, via the formation of 2-isopropylmaleate. In Archaeoglobus fulgidus (strain ATCC 49558 / DSM 4304 / JCM 9628 / NBRC 100126 / VC-16), this protein is 3-isopropylmalate dehydratase small subunit 2 (leuD2).